We begin with the raw amino-acid sequence, 81 residues long: MASIEERVVDIVSEQLGVDKDKITRETSFVNDLGADSLDTVELVMELEEEFDISIPDDSAEKIQKVGEAIDFIEKEKGEDA.

In terms of domain architecture, Carrier spans 2-77 (ASIEERVVDI…EAIDFIEKEK (76 aa)). Residue S37 is modified to O-(pantetheine 4'-phosphoryl)serine.

The protein belongs to the acyl carrier protein (ACP) family. 4'-phosphopantetheine is transferred from CoA to a specific serine of apo-ACP by AcpS. This modification is essential for activity because fatty acids are bound in thioester linkage to the sulfhydryl of the prosthetic group.

It is found in the cytoplasm. It participates in lipid metabolism; fatty acid biosynthesis. Functionally, carrier of the growing fatty acid chain in fatty acid biosynthesis. The chain is Acyl carrier protein from Rhodopirellula baltica (strain DSM 10527 / NCIMB 13988 / SH1).